A 177-amino-acid polypeptide reads, in one-letter code: Large ribosomal subunit protein uL6 (177 aa).

Belongs to the universal ribosomal protein uL6 family. Part of the 50S ribosomal subunit.

This protein binds to the 23S rRNA, and is important in its secondary structure. It is located near the subunit interface in the base of the L7/L12 stalk, and near the tRNA binding site of the peptidyltransferase center. This Idiomarina loihiensis (strain ATCC BAA-735 / DSM 15497 / L2-TR) protein is Large ribosomal subunit protein uL6.